The following is a 123-amino-acid chain: MDNKTYEISSAEWEVMNIIWMKKYASANNIIEEIQMQKDWSPKTIRTLITRLYKKGFIDRKKDNKIFQYYSLVEESDIKYKTSKNFINKVYKGGFNSLVLNFVEKEDLSQDEIEELRNILNKK.

Residues 7–71 constitute a DNA-binding region (H-T-H motif); it reads EISSAEWEVM…KDNKIFQYYS (65 aa). The tract at residues 74-123 is important for dimerization; sequence EESDIKYKTSKNFINKVYKGGFNSLVLNFVEKEDLSQDEIEELRNILNKK.

This sequence belongs to the BlaI transcriptional regulatory family. Monomer and homodimer. In terms of processing, upon exposure to beta-lactams, proteolytic cleavage at a single site impairs dimerization and abolishes repressor activity.

The protein resides in the cytoplasm. In terms of biological role, transcriptional repressor that constitutively blocks the transcription of the gene for the penicillin-binding protein MecA. Binds palindromic DNA with the sequence 5'-TACA-[AT]-N-TGTA-3'. Regulates genes involved in antibiotic resistance. Binds DNA as a dimer. The polypeptide is Methicillin resistance regulatory protein MecI (mecI) (Staphylococcus aureus (strain N315)).